Reading from the N-terminus, the 64-residue chain is MPKIKTNRGAAKRFKKTASGFKRKQAFKNHILTKKSSKTIRKLRPKQEVHENDVALVKRMMPYA.

It belongs to the bacterial ribosomal protein bL35 family.

The protein is Large ribosomal subunit protein bL35 of Alcanivorax borkumensis (strain ATCC 700651 / DSM 11573 / NCIMB 13689 / SK2).